A 160-amino-acid polypeptide reads, in one-letter code: Ribosomal RNA large subunit methyltransferase H (160 aa).

Residues leucine 76, glycine 108, and 127-132 (LGKMTW) each bind S-adenosyl-L-methionine.

This sequence belongs to the RNA methyltransferase RlmH family. In terms of assembly, homodimer.

Its subcellular location is the cytoplasm. It catalyses the reaction pseudouridine(1915) in 23S rRNA + S-adenosyl-L-methionine = N(3)-methylpseudouridine(1915) in 23S rRNA + S-adenosyl-L-homocysteine + H(+). Functionally, specifically methylates the pseudouridine at position 1915 (m3Psi1915) in 23S rRNA. This is Ribosomal RNA large subunit methyltransferase H from Sinorhizobium medicae (strain WSM419) (Ensifer medicae).